We begin with the raw amino-acid sequence, 237 residues long: Phosphatidylserine decarboxylase proenzyme (237 aa).

Residue Ser206 is the Schiff-base intermediate with substrate; via pyruvic acid of the active site. Ser206 carries the pyruvic acid (Ser); by autocatalysis modification.

This sequence belongs to the phosphatidylserine decarboxylase family. PSD-A subfamily. As to quaternary structure, heterodimer of a large membrane-associated beta subunit and a small pyruvoyl-containing alpha subunit. Pyruvate serves as cofactor. In terms of processing, is synthesized initially as an inactive proenzyme. Formation of the active enzyme involves a self-maturation process in which the active site pyruvoyl group is generated from an internal serine residue via an autocatalytic post-translational modification. Two non-identical subunits are generated from the proenzyme in this reaction, and the pyruvate is formed at the N-terminus of the alpha chain, which is derived from the carboxyl end of the proenzyme. The post-translation cleavage follows an unusual pathway, termed non-hydrolytic serinolysis, in which the side chain hydroxyl group of the serine supplies its oxygen atom to form the C-terminus of the beta chain, while the remainder of the serine residue undergoes an oxidative deamination to produce ammonia and the pyruvoyl prosthetic group on the alpha chain.

It is found in the cell membrane. It carries out the reaction a 1,2-diacyl-sn-glycero-3-phospho-L-serine + H(+) = a 1,2-diacyl-sn-glycero-3-phosphoethanolamine + CO2. The protein operates within phospholipid metabolism; phosphatidylethanolamine biosynthesis; phosphatidylethanolamine from CDP-diacylglycerol: step 2/2. Catalyzes the formation of phosphatidylethanolamine (PtdEtn) from phosphatidylserine (PtdSer). In Rhodococcus jostii (strain RHA1), this protein is Phosphatidylserine decarboxylase proenzyme.